Reading from the N-terminus, the 57-residue chain is UPF0391 membrane protein RB0084 (57 aa).

2 helical membrane passes run 4–24 and 33–53; these read WALIFFVISLIAGFLGFSGVS and ILFYIAVIIFLVFLVLALAVG.

It belongs to the UPF0391 family.

The protein localises to the cell membrane. This is UPF0391 membrane protein RB0084 from Rhizobium meliloti (strain 1021) (Ensifer meliloti).